A 677-amino-acid chain; its full sequence is Methionine--tRNA ligase (677 aa).

The short motif at 15–25 (PYANGSIHLGH) is the 'HIGH' region element. 4 residues coordinate Zn(2+): cysteine 146, cysteine 149, cysteine 159, and cysteine 162. The 'KMSKS' region signature appears at 333-337 (KMSKS). Lysine 336 contributes to the ATP binding site. Positions 575-677 (DFAKVDLRVA…DGAKPGQQVK (103 aa)) constitute a tRNA-binding domain.

Belongs to the class-I aminoacyl-tRNA synthetase family. MetG type 1 subfamily. As to quaternary structure, homodimer. The cofactor is Zn(2+).

It is found in the cytoplasm. The enzyme catalyses tRNA(Met) + L-methionine + ATP = L-methionyl-tRNA(Met) + AMP + diphosphate. Functionally, is required not only for elongation of protein synthesis but also for the initiation of all mRNA translation through initiator tRNA(fMet) aminoacylation. This chain is Methionine--tRNA ligase, found in Salmonella arizonae (strain ATCC BAA-731 / CDC346-86 / RSK2980).